The chain runs to 701 residues: Elongation factor G 1 (701 aa).

In terms of domain architecture, tr-type G spans 8 to 290; the sequence is VRYRNIGICA…AVVEYLPAPT (283 aa). GTP-binding positions include 17–24, 88–92, and 142–145; these read AHVDAGKT, DTPGH, and NKMD.

It belongs to the TRAFAC class translation factor GTPase superfamily. Classic translation factor GTPase family. EF-G/EF-2 subfamily.

It localises to the cytoplasm. Functionally, catalyzes the GTP-dependent ribosomal translocation step during translation elongation. During this step, the ribosome changes from the pre-translocational (PRE) to the post-translocational (POST) state as the newly formed A-site-bound peptidyl-tRNA and P-site-bound deacylated tRNA move to the P and E sites, respectively. Catalyzes the coordinated movement of the two tRNA molecules, the mRNA and conformational changes in the ribosome. The chain is Elongation factor G 1 from Saccharophagus degradans (strain 2-40 / ATCC 43961 / DSM 17024).